We begin with the raw amino-acid sequence, 221 residues long: Carotenogenesis protein CarR (221 aa).

A run of 6 helical transmembrane segments spans residues 56-76 (LGLLAAVVLLAVGAVTGPLLL), 79-99 (APLLAMLVGTSAVCAWGALSP), 107-127 (LGVGLAVVSAAALVLARGAPH), 136-156 (VCTVSHLAIGVVPLVVALFAL), 166-186 (AVVAGLSVGSTGALLGELACE), and 191-211 (HVLSHHLLAWVVITVVLVVIS).

The protein localises to the cell inner membrane. Negative regulator of the carotenoid synthesis regulon. It is probably inactivated by protoporphyrin IX in the presence of blue light. Inactivation of CarR leads to loss of negative control over the carotenogenesis protein CarQ. In Myxococcus xanthus, this protein is Carotenogenesis protein CarR (carR).